Here is a 109-residue protein sequence, read N- to C-terminus: Iron-sulfur cluster assembly protein CyaY (109 aa).

The protein belongs to the frataxin family.

In terms of biological role, involved in iron-sulfur (Fe-S) cluster assembly. May act as a regulator of Fe-S biogenesis. The chain is Iron-sulfur cluster assembly protein CyaY from Verminephrobacter eiseniae (strain EF01-2).